We begin with the raw amino-acid sequence, 393 residues long: Putative F-box/kelch-repeat protein At1g32430 (393 aa).

One can recognise an F-box domain in the interval 1-47; sequence MANKEKLPWDLEEEILSRVPPTSLDRFKTVCKRWNALFNDKTFINNH. Kelch repeat units follow at residues 151 to 199 and 308 to 357; these read YMKD…NLSV and WIYV…QVQF.

The protein is Putative F-box/kelch-repeat protein At1g32430 of Arabidopsis thaliana (Mouse-ear cress).